The chain runs to 400 residues: uncharacterized protein (400 aa).

To M.jannaschii MJ1544 and MJ1637.

This is an uncharacterized protein from Haemophilus influenzae (strain ATCC 51907 / DSM 11121 / KW20 / Rd).